The following is a 115-amino-acid chain: Large ribosomal subunit protein uL22 (115 aa).

This sequence belongs to the universal ribosomal protein uL22 family. As to quaternary structure, part of the 50S ribosomal subunit.

Functionally, this protein binds specifically to 23S rRNA; its binding is stimulated by other ribosomal proteins, e.g. L4, L17, and L20. It is important during the early stages of 50S assembly. It makes multiple contacts with different domains of the 23S rRNA in the assembled 50S subunit and ribosome. In terms of biological role, the globular domain of the protein is located near the polypeptide exit tunnel on the outside of the subunit, while an extended beta-hairpin is found that lines the wall of the exit tunnel in the center of the 70S ribosome. This chain is Large ribosomal subunit protein uL22, found in Enterococcus faecalis (strain ATCC 700802 / V583).